The primary structure comprises 605 residues: MRIKKRNTRGNARNFITRSQAVRKLQISLADFRRLCIFKGIYPREPRNKKKANKGSTAPTTFYYYKDIQYLMHEPVLAKFREHKTFAKKLTKALGRGEVSAAKRLEENRPNYQLDNIIKERYPSFADALRDVDDALNMLFLFANLPATDQVSSRITQSAQQMCDQWSAYIAKERCVRKVFVSIKGVYYQASVKGEDVRWLVPYKFPENIPSDVDFRIMLTFLEFYSTLLHFVLFKLYTDAGLVYPPKLDIKKNKLIGGLSAYILESNDEKSSLAVKPKELSENVEVQELGANTLKTALKADSNEHDEEEQDQDQEQNVEDVELDKFEDTNKNQGDQLEQPSKFDSPVATLFSEFVFYVGREVPLDIVEFLILSCGGSAVSEATLDQLTDKQDIDLSKVTHQIVDRPVLKNKVANRTYVQPQWIFDSINKCELVPANLYLPGEPLPPHLSPWGDSTGYDPTAENDEDVEGSDAEEIDESADEDAESEEVEEDDTAAVALNEDDEDDEDELRQQKELELEAQGISYSEAKDVIDSESSDKKKKKKRKATEEEEEKDLKLIMMSNKQRKLYKKMKYSNEKKDEKIEQLKQKKKQIAKTKAKLAKLDKK.

A BRCT domain is found at 346–440 (PVATLFSEFV…ELVPANLYLP (95 aa)). Residues 449–553 (SPWGDSTGYD…RKATEEEEEK (105 aa)) are disordered. The segment covering 461-508 (AENDEDVEGSDAEEIDESADEDAESEEVEEDDTAAVALNEDDEDDEDE) has biased composition (acidic residues). Residues 526-537 (EAKDVIDSESSD) are compositionally biased toward basic and acidic residues. Residues 533 to 605 (SESSDKKKKK…KAKLAKLDKK (73 aa)) are a coiled coil.

Belongs to the pescadillo family. As to quaternary structure, component of the NOP7 complex, composed of ERB1, NOP7 and YTM1. The complex is held together by ERB1, which interacts with NOP7 via its N-terminal domain and with YTM1 via a high-affinity interaction between the seven-bladed beta-propeller domains of the 2 proteins. The NOP7 complex associates with the 66S pre-ribosome.

The protein localises to the nucleus. The protein resides in the nucleolus. It is found in the nucleoplasm. In terms of biological role, component of the NOP7 complex, which is required for maturation of the 25S and 5.8S ribosomal RNAs and formation of the 60S ribosome. The protein is Pescadillo homolog of Kluyveromyces lactis (strain ATCC 8585 / CBS 2359 / DSM 70799 / NBRC 1267 / NRRL Y-1140 / WM37) (Yeast).